The following is an 85-amino-acid chain: Defensin-like protein 112 (85 aa).

Residues 1–24 (MAISKKMLTTFVLTILLAVSFVHC) form the signal peptide. Intrachain disulfides connect cysteine 40/cysteine 80, cysteine 46/cysteine 71, cysteine 56/cysteine 78, and cysteine 60/cysteine 79.

This sequence belongs to the DEFL family.

The protein resides in the secreted. The chain is Defensin-like protein 112 from Arabidopsis thaliana (Mouse-ear cress).